Here is a 474-residue protein sequence, read N- to C-terminus: Trehalose-6-phosphate synthase (474 aa).

D-glucose 6-phosphate is bound at residue arginine 10. Position 22 to 23 (22 to 23 (GG)) interacts with UDP-alpha-D-glucose. Residues tyrosine 77 and aspartate 131 each coordinate D-glucose 6-phosphate. Residues arginine 263 and lysine 268 each contribute to the UDP-alpha-D-glucose site. D-glucose 6-phosphate is bound at residue arginine 301. UDP-alpha-D-glucose is bound by residues phenylalanine 340 and 366–370 (LVAKE).

This sequence belongs to the glycosyltransferase 20 family. In terms of assembly, homotetramer.

The enzyme catalyses D-glucose 6-phosphate + UDP-alpha-D-glucose = alpha,alpha-trehalose 6-phosphate + UDP + H(+). Its pathway is glycan biosynthesis; trehalose biosynthesis. Functionally, probably involved in the osmoprotection via the biosynthesis of trehalose. Catalyzes the transfer of glucose from UDP-alpha-D-glucose (UDP-Glc) to D-glucose 6-phosphate (Glc-6-P) to form trehalose-6-phosphate. Acts with retention of the anomeric configuration of the UDP-sugar donor. The polypeptide is Trehalose-6-phosphate synthase (Cronobacter sakazakii (strain ATCC BAA-894) (Enterobacter sakazakii)).